The following is a 454-amino-acid chain: tRNA(Ile)-lysidine synthase (454 aa).

27 to 32 (SGGSDS) contributes to the ATP binding site.

The protein belongs to the tRNA(Ile)-lysidine synthase family.

It localises to the cytoplasm. It carries out the reaction cytidine(34) in tRNA(Ile2) + L-lysine + ATP = lysidine(34) in tRNA(Ile2) + AMP + diphosphate + H(+). Ligates lysine onto the cytidine present at position 34 of the AUA codon-specific tRNA(Ile) that contains the anticodon CAU, in an ATP-dependent manner. Cytidine is converted to lysidine, thus changing the amino acid specificity of the tRNA from methionine to isoleucine. The chain is tRNA(Ile)-lysidine synthase from Mesorhizobium japonicum (strain LMG 29417 / CECT 9101 / MAFF 303099) (Mesorhizobium loti (strain MAFF 303099)).